A 204-amino-acid polypeptide reads, in one-letter code: Ras-related protein RABG1 (204 aa).

12-19 (GDSGVGKT) contributes to the GTP binding site. The short motif at 34–42 (HNSTIYVDL) is the Effector region element. Residues 60–64 (DTAGQ), 122–125 (NKTD), and 155–156 (SA) contribute to the GTP site. S-geranylgeranyl cysteine attachment occurs at residues C202 and C204. Cysteine methyl ester is present on C204.

The protein belongs to the small GTPase superfamily. Rab family.

Its subcellular location is the cell membrane. Its function is as follows. Intracellular vesicle trafficking and protein transport. This Arabidopsis thaliana (Mouse-ear cress) protein is Ras-related protein RABG1 (RABG1).